We begin with the raw amino-acid sequence, 263 residues long: Endonuclease 8 (263 aa).

Pro-2 acts as the Schiff-base intermediate with DNA in catalysis. The Proton donor role is filled by Glu-3. The active-site Proton donor; for beta-elimination activity is the Lys-53. The DNA site is built by Gln-70, Arg-125, and Asn-169. The segment at 229 to 263 (KVFHRDGESCERCGGIIERTMLSSRPFYWCPHCQR) adopts an FPG-type zinc-finger fold. Arg-253 functions as the Proton donor; for delta-elimination activity in the catalytic mechanism.

This sequence belongs to the FPG family. The cofactor is Zn(2+).

The enzyme catalyses 2'-deoxyribonucleotide-(2'-deoxyribose 5'-phosphate)-2'-deoxyribonucleotide-DNA = a 3'-end 2'-deoxyribonucleotide-(2,3-dehydro-2,3-deoxyribose 5'-phosphate)-DNA + a 5'-end 5'-phospho-2'-deoxyribonucleoside-DNA + H(+). Functionally, involved in base excision repair of DNA damaged by oxidation or by mutagenic agents. Acts as a DNA glycosylase that recognizes and removes damaged bases. Has a preference for oxidized pyrimidines, such as thymine glycol, 5,6-dihydrouracil and 5,6-dihydrothymine. Has AP (apurinic/apyrimidinic) lyase activity and introduces nicks in the DNA strand. Cleaves the DNA backbone by beta-delta elimination to generate a single-strand break at the site of the removed base with both 3'- and 5'-phosphates. The polypeptide is Endonuclease 8 (Pectobacterium carotovorum subsp. carotovorum (strain PC1)).